A 63-amino-acid polypeptide reads, in one-letter code: UPF0370 protein PC1_1167 (63 aa).

Residues 3–23 (WLADYWWIILIILIGMLINGI) form a helical membrane-spanning segment. The disordered stretch occupies residues 37–63 (NKPKLPPHRDNNDKWDDEDDDWPKKKP).

The protein belongs to the UPF0370 family.

It localises to the cell membrane. In Pectobacterium carotovorum subsp. carotovorum (strain PC1), this protein is UPF0370 protein PC1_1167.